The chain runs to 1109 residues: Receptor-like protein kinase (1109 aa).

The signal sequence occupies residues 1 to 20 (MKVAVNTFLLFLCSTSSIYA). Residues 21-764 (AFALNSDGAA…GGLSTLGIAM (744 aa)) lie on the Extracellular side of the membrane. Residues N50, N74, and N114 are each glycosylated (N-linked (GlcNAc...) asparagine). LRR repeat units follow at residues 69 to 92 (FVDT…SHLK), 93 to 115 (HLKK…LGNC), 117 to 140 (LLEH…GALQ), 141 to 162 (NLRN…SLLS), 165 to 187 (HLET…IGNM), and 189 to 209 (ELTT…SSLG). N-linked (GlcNAc...) asparagine glycans are attached at residues N144, N177, and N186. N210 carries N-linked (GlcNAc...) asparagine glycosylation. 20 LRR repeats span residues 213 to 236 (TLQE…NNLE), 237 to 258 (NLVY…DFVS), 261 to 284 (QIDT…GNCT), 309 to 331 (KLDT…LGKC), 333 to 355 (SMID…LGML), 357 to 378 (QLQY…SIWK), 381 to 404 (SLQS…TELK), 405 to 427 (QLVS…LGAN), 429 to 451 (SLEV…LCSQ), 453 to 476 (KLKR…GGCS), 477 to 499 (TLER…VEKQ), 500 to 523 (NLLF…GNLK), 524 to 546 (NVTA…LGSL), 548 to 569 (KLEH…ELSN), 572 to 595 (KLSE…GSLT), 596 to 618 (ELTK…LFQS), 620 to 642 (KLLN…GALQ), 643 to 666 (ALRS…GKLK), 667 to 689 (MLEE…STIQ), and 690 to 710 (SLTF…PSLT). N-linked (GlcNAc...) asparagine glycans are attached at residues N245 and N282. N367, N391, and N427 each carry an N-linked (GlcNAc...) asparagine glycan. N510, N524, N553, and N584 each carry an N-linked (GlcNAc...) asparagine glycan. Residues N648, N677, and N695 are each glycosylated (N-linked (GlcNAc...) asparagine). A helical transmembrane segment spans residues 765-785 (IVLGALLFIICLFLFSAFLFL). The Cytoplasmic segment spans residues 786-1109 (HCKKSVQEIA…YSSSVRNKSK (324 aa)). The Protein kinase domain maps to 816-1096 (LNDKYVIGKG…DVVKQLTRWS (281 aa)). Residues 822-830 (IGKGAHGTI) and K845 contribute to the ATP site. One copy of the LRR 27 repeat lies at 827–850 (HGTIYKATLSPDKVYAVKKLVFTG). The active-site Proton acceptor is D942. An LRR 28 repeat occupies 958–981 (ISDFGIAKLLDQSATSIPSNTVQG).

It belongs to the protein kinase superfamily. Ser/Thr protein kinase family. INRPK1 and INRPK1b are expressed in leaves, cotyledons, shoot tips and roots from induced and vegetative plants. The highest concentrations of INRPK1 are found in vegetative roots, and the lowest concentrations in vegetative cotyledons. INRPK1b is more abundant in roots than other tissues. INRPK1a is expressed in vegetative roots. INRPK1c is expressed in cotyledons.

Its subcellular location is the cell membrane. The protein localises to the secreted. It catalyses the reaction L-seryl-[protein] + ATP = O-phospho-L-seryl-[protein] + ADP + H(+). The enzyme catalyses L-threonyl-[protein] + ATP = O-phospho-L-threonyl-[protein] + ADP + H(+). In terms of biological role, possible role in short-day photoperiod floral induction. This Ipomoea nil (Japanese morning glory) protein is Receptor-like protein kinase (INRPK1).